The following is a 727-amino-acid chain: ADP-ribosylation factor-binding protein GGA3 (727 aa).

The VHS domain occupies 16-146 (ATNPSNRQED…MLKRQGIVQS (131 aa)). 2 positions are modified to phosphoserine: Ser-159 and Ser-275. In terms of domain architecture, GAT spans 171–298 (DEEKSKLLAK…VINSYKTIIE (128 aa)). The unstructured hinge stretch occupies residues 299-597 (GQIINGEVTT…VHVPLESIKP (299 aa)). The tract at residues 334–385 (TPSSSSPVLAPAPAPPTSGIPILPPPPQTSGPPRSRSSSQAEAPSGPDSTNN) is disordered. The span at 343-363 (APAPAPPTSGIPILPPPPQTS) shows a compositional bias: pro residues. Over residues 364 to 374 (GPPRSRSSSQA) the composition is skewed to low complexity. Residues 391 to 395 (DEELL) carry the DXXLL motif. Residues 400–419 (SDPAPTAPKESAGNSPWHLF) form a disordered region. One can recognise a GAE domain in the interval 598 to 719 (SSALPVTAYD…TELGEVDQFP (122 aa)).

The protein belongs to the GGA protein family. Monomer. Interacts with GGA1 and GGA2. Binds to clathrin and activated ARFs, such as ARF1, ARF5 and ARF6. Binds RABEP1 and RABGEF1. Interacts with the membrane proteins M6PR/CD-MPR and IGF2R/CI-MPR and the accessory proteins SYNRG, EPN4, NECAP1, NECAP2 and AFTPH/aftiphilin. Interacts with TSG101 and UBC. Interacts with ADRA2B. Interacts with NTRK1; the interaction is independent of NTRK1 activation and ubiquitination. Interacts (via VHS domain) with BACE1 (via DXXLL motif). In terms of processing, phosphorylated by CK2 and dephosphorylated by PP2A. Phosphorylation of GGA3 allows the internal DXXLL motif to bind the VHS domain and to inhibit the recognition of cargo signals. Ubiquitinated. Post-translationally, proteolytically cleaved during apoptosis by CASP3.

It is found in the golgi apparatus. The protein resides in the trans-Golgi network membrane. Its subcellular location is the endosome membrane. It localises to the early endosome membrane. The protein localises to the recycling endosome membrane. Plays a role in protein sorting and trafficking between the trans-Golgi network (TGN) and endosomes. Mediates the ARF-dependent recruitment of clathrin to the TGN and binds ubiquitinated proteins and membrane cargo molecules with a cytosolic acidic cluster-dileucine (DXXLL) motif. Mediates export of the GPCR receptor ADRA2B to the cell surface. Involved in BACE1 transport and sorting as well as regulation of BACE1 protein levels. Regulates retrograde transport of BACE1 from endosomes to the trans-Golgi network via interaction through the VHS motif and dependent of BACE1 phosphorylation. Modulates BACE1 protein levels independently of the interaction between VHS domain and DXXLL motif through recognition of ubiquitination. Key player in a novel DXXLL-mediated endosomal sorting machinery to the recycling pathway that targets NTRK1 to the plasma membrane. This chain is ADP-ribosylation factor-binding protein GGA3, found in Rattus norvegicus (Rat).